Reading from the N-terminus, the 866-residue chain is Paramyosin (866 aa).

Residues 1–22 (MMNHDTESHVKISRTIYRGVSP) are nonhelical region. Residues 23 to 839 (STTRLESRVR…AERTVTVRRV (817 aa)) adopt a coiled-coil conformation. A nonhelical region region spans residues 840 to 866 (GPGGRAVSVARELSVTSNRGMRATSMM).

Belongs to the paramyosin family. As to quaternary structure, homodimer.

The protein resides in the cytoplasm. The protein localises to the myofibril. Its function is as follows. Paramyosin is a major structural component of many thick filaments isolated from invertebrate muscles. The chain is Paramyosin from Schistosoma japonicum (Blood fluke).